A 171-amino-acid chain; its full sequence is MSAPLIVLVGPMGVGKSTVGQLLAERLGTGYRDTDEDIVTAQGRAIAEIFVDEGEAAFRTLEKEAVRTALAEHEGVLALGGGAILDADTRALLAGQRVVYLSMDVEEAVKRTGLNAARPLLAVNPRKQWRELMEARRHLYEDVATAVVATDGRTPEEVTQAALDAVELKEA.

13-18 (GVGKST) provides a ligand contact to ATP. Ser-17 provides a ligand contact to Mg(2+). 3 residues coordinate substrate: Asp-35, Arg-59, and Gly-81. Arg-118 is an ATP binding site. Position 136 (Arg-136) interacts with substrate. Arg-153 serves as a coordination point for ATP.

Belongs to the shikimate kinase family. In terms of assembly, monomer. The cofactor is Mg(2+).

It is found in the cytoplasm. The enzyme catalyses shikimate + ATP = 3-phosphoshikimate + ADP + H(+). The protein operates within metabolic intermediate biosynthesis; chorismate biosynthesis; chorismate from D-erythrose 4-phosphate and phosphoenolpyruvate: step 5/7. Catalyzes the specific phosphorylation of the 3-hydroxyl group of shikimic acid using ATP as a cosubstrate. This chain is Shikimate kinase, found in Streptomyces coelicolor (strain ATCC BAA-471 / A3(2) / M145).